We begin with the raw amino-acid sequence, 235 residues long: MTDLTEKNTALEEEKIESAVENQQKSIWKEIFAQGIWKNNPAVVQLLGLCPLLAVSSTATNALGLGLATMLVLTCTNTVISLFRQYIPKEIRIPIYVMIIATTVTAVQLLMNAYTYTLYQSLGIFIPLIVTNCIIIGRAEAFASKNSLLHSIWDGFSMGLGMALSLTILGALREIIGQGTIFEGIENLFGEQAKFLTHHIYHTDSSFLLFILPPGAFIGLGLLLAIKNRIDNVKK.

The next 5 membrane-spanning stretches (helical) occupy residues L63–F83, I93–A113, T117–G137, I152–L172, and S206–I226.

It belongs to the NqrDE/RnfAE family. In terms of assembly, the complex is composed of six subunits: RnfA, RnfB, RnfC, RnfD, RnfE and RnfG.

The protein localises to the cell inner membrane. Its function is as follows. Part of a membrane-bound complex that couples electron transfer with translocation of ions across the membrane. The sequence is that of Ion-translocating oxidoreductase complex subunit E from Haemophilus influenzae (strain 86-028NP).